A 165-amino-acid polypeptide reads, in one-letter code: Chorismate pyruvate-lyase (165 aa).

Methionine 35, arginine 77, leucine 115, and glutamate 156 together coordinate substrate.

Belongs to the UbiC family. In terms of assembly, monomer.

It localises to the cytoplasm. The catalysed reaction is chorismate = 4-hydroxybenzoate + pyruvate. Its pathway is cofactor biosynthesis; ubiquinone biosynthesis. Its function is as follows. Removes the pyruvyl group from chorismate, with concomitant aromatization of the ring, to provide 4-hydroxybenzoate (4HB) for the ubiquinone pathway. In Salmonella gallinarum (strain 287/91 / NCTC 13346), this protein is Chorismate pyruvate-lyase.